The primary structure comprises 248 residues: Methyl-coenzyme M reductase subunit gamma (248 aa).

R121 contacts coenzyme M.

It belongs to the methyl-coenzyme M reductase gamma subunit family. MCR is a hexamer of two alpha, two beta, and two gamma chains, forming a dimer of heterotrimers. It depends on coenzyme F430 as a cofactor.

The protein localises to the cytoplasm. It carries out the reaction coenzyme B + methyl-coenzyme M = methane + coenzyme M-coenzyme B heterodisulfide. It functions in the pathway one-carbon metabolism; methyl-coenzyme M reduction; methane from methyl-coenzyme M: step 1/1. In terms of biological role, component of the methyl-coenzyme M reductase (MCR) I that catalyzes the reductive cleavage of methyl-coenzyme M (CoM-S-CH3 or 2-(methylthio)ethanesulfonate) using coenzyme B (CoB or 7-mercaptoheptanoylthreonine phosphate) as reductant which results in the production of methane and the mixed heterodisulfide of CoB and CoM (CoM-S-S-CoB). This is the final step in methanogenesis. This is Methyl-coenzyme M reductase subunit gamma (mcrG) from Methanosarcina barkeri (strain Fusaro / DSM 804).